The following is a 196-amino-acid chain: Probable malonic semialdehyde reductase RutE (196 aa).

It belongs to the nitroreductase family. HadB/RutE subfamily. FMN serves as cofactor.

The enzyme catalyses 3-hydroxypropanoate + NADP(+) = 3-oxopropanoate + NADPH + H(+). Its function is as follows. May reduce toxic product malonic semialdehyde to 3-hydroxypropionic acid, which is excreted. This is Probable malonic semialdehyde reductase RutE from Escherichia coli O45:K1 (strain S88 / ExPEC).